A 1174-amino-acid chain; its full sequence is Ribonucleoside-diphosphate reductase large subunit-like protein (1174 aa).

The short motif at 50–72 is the RIP homotypic interaction motif (RHIM) element; sequence PYVRIMNGVSGIQIGNHNAMSIA. 2 disordered regions span residues 170 to 269 and 291 to 325; these read ASNA…KLKP and AAAA…DQSS. 3 stretches are compositionally biased toward low complexity: residues 182 to 202, 233 to 243, and 291 to 316; these read ATSG…AATA, HVSVGTQATPS, and AAAA…AMAT.

The protein belongs to the ribonucleoside diphosphate reductase large chain family. Self-assembles into homo-oligomeric amyloid fibrils. Interacts with host RIPK1 (via RIP homotypic interaction motif); this interaction inhibits RIPK1 ubiquitination thereby preventing effective activation of host NF-kappa-B. Interacts with host RIPK3 (via RIP homotypic interaction motif); this interaction disrupts RIPK3-RIPK1 interactions characteristic of TNF-alpha induced necroptosis, thereby suppressing this death pathway. Interacts (via RIP homotypic interaction motif) with host ZBP1 (via RIP homotypic interaction motif); this interaction inhibits recruitment of RIPK1 and RIPK3 to ZBP1 and prevents ZBP1-induced NF-kappa-B activation. Post-translationally, undergoes proteolytic cleavage, generating two peptides, a N-terminal and a 116 kDa. The N-terminal peptide retains RIPK1- and RIPK3-binding activity as well as cell death suppression activity.

It is found in the virion. The protein resides in the host cytoplasm. In terms of biological role, provides optimal viral replication conditions by promoting host cell survival and avoiding the host inflammatory response linked to NF-kappa-B activation. Blocks RIPK1 ubiquitination, thereby preventing NF-kappa-B activation and virally induced inflammatory response. Prevents host necroptosis by targeting RIPK3 thereby preventing the formation of necroptotic RIPK1-RIPK3 complexes. Also inhibits ZBP1-induced necroptosis. Does not have ribonucleotide reductase activity. Betaherpesviruses probably use another strategy to expand the dNTP pool in a quiescent host cell. In Murid herpesvirus 1 (strain Smith) (MuHV-1), this protein is Ribonucleoside-diphosphate reductase large subunit-like protein.